A 98-amino-acid chain; its full sequence is Large ribosomal subunit protein uL23 (98 aa).

It belongs to the universal ribosomal protein uL23 family. In terms of assembly, part of the 50S ribosomal subunit. Contacts protein L29, and trigger factor when it is bound to the ribosome.

One of the early assembly proteins it binds 23S rRNA. One of the proteins that surrounds the polypeptide exit tunnel on the outside of the ribosome. Forms the main docking site for trigger factor binding to the ribosome. This chain is Large ribosomal subunit protein uL23, found in Clostridium beijerinckii (strain ATCC 51743 / NCIMB 8052) (Clostridium acetobutylicum).